Reading from the N-terminus, the 126-residue chain is Large ribosomal subunit protein bL12 (126 aa).

This sequence belongs to the bacterial ribosomal protein bL12 family. Homodimer. Part of the ribosomal stalk of the 50S ribosomal subunit. Forms a multimeric L10(L12)X complex, where L10 forms an elongated spine to which 2 to 4 L12 dimers bind in a sequential fashion. Binds GTP-bound translation factors.

Forms part of the ribosomal stalk which helps the ribosome interact with GTP-bound translation factors. Is thus essential for accurate translation. The protein is Large ribosomal subunit protein bL12 of Chlorobium phaeobacteroides (strain BS1).